A 701-amino-acid chain; its full sequence is Glycine--tRNA ligase beta subunit (701 aa).

It belongs to the class-II aminoacyl-tRNA synthetase family. Tetramer of two alpha and two beta subunits.

The protein localises to the cytoplasm. The enzyme catalyses tRNA(Gly) + glycine + ATP = glycyl-tRNA(Gly) + AMP + diphosphate. The protein is Glycine--tRNA ligase beta subunit of Helicobacter pylori (strain HPAG1).